The following is a 157-amino-acid chain: UPF0758 protein VC_0510 (157 aa).

The region spanning 36 to 157 is the MPN domain; it reads ALTNPDATKE…CTSFAERGWL (122 aa). The Zn(2+) site is built by H107, H109, and D120. Residues 107-120 carry the JAMM motif motif; the sequence is HNHPSGDSTPSQAD.

This sequence belongs to the UPF0758 family.

The protein is UPF0758 protein VC_0510 of Vibrio cholerae serotype O1 (strain ATCC 39315 / El Tor Inaba N16961).